We begin with the raw amino-acid sequence, 436 residues long: Methylenetetrahydrofolate--tRNA-(uracil-5-)-methyltransferase TrmFO (436 aa).

G7–G12 serves as a coordination point for FAD.

This sequence belongs to the MnmG family. TrmFO subfamily. The cofactor is FAD.

It is found in the cytoplasm. The enzyme catalyses uridine(54) in tRNA + (6R)-5,10-methylene-5,6,7,8-tetrahydrofolate + NADH + H(+) = 5-methyluridine(54) in tRNA + (6S)-5,6,7,8-tetrahydrofolate + NAD(+). It carries out the reaction uridine(54) in tRNA + (6R)-5,10-methylene-5,6,7,8-tetrahydrofolate + NADPH + H(+) = 5-methyluridine(54) in tRNA + (6S)-5,6,7,8-tetrahydrofolate + NADP(+). In terms of biological role, catalyzes the folate-dependent formation of 5-methyl-uridine at position 54 (M-5-U54) in all tRNAs. The protein is Methylenetetrahydrofolate--tRNA-(uracil-5-)-methyltransferase TrmFO of Caldicellulosiruptor bescii (strain ATCC BAA-1888 / DSM 6725 / KCTC 15123 / Z-1320) (Anaerocellum thermophilum).